Reading from the N-terminus, the 283-residue chain is NAD kinase (283 aa).

Catalysis depends on aspartate 66, which acts as the Proton acceptor. NAD(+) is bound by residues 66–67, 140–141, arginine 151, arginine 168, aspartate 170, and glutamine 240; these read DG and ND.

It belongs to the NAD kinase family. It depends on a divalent metal cation as a cofactor.

It localises to the cytoplasm. The enzyme catalyses NAD(+) + ATP = ADP + NADP(+) + H(+). Functionally, involved in the regulation of the intracellular balance of NAD and NADP, and is a key enzyme in the biosynthesis of NADP. Catalyzes specifically the phosphorylation on 2'-hydroxyl of the adenosine moiety of NAD to yield NADP. In Syntrophobacter fumaroxidans (strain DSM 10017 / MPOB), this protein is NAD kinase.